Here is a 47-residue protein sequence, read N- to C-terminus: Delta-actitoxin-Aspp1b (47 aa).

3 disulfide bridges follow: Cys-4–Cys-44, Cys-6–Cys-34, and Cys-27–Cys-45.

This sequence belongs to the sea anemone sodium channel inhibitory toxin family. Type I subfamily.

It is found in the secreted. Its subcellular location is the nematocyst. Functionally, binds specifically to voltage-gated sodium channels (Nav), thereby delaying their inactivation during signal transduction. Has a longer mammalian heart stimulation effect than Hk2a, Hk8a and Hk16a. This Anthopleura sp. (strain 'Zhanjiang') (Sea anemone) protein is Delta-actitoxin-Aspp1b.